A 158-amino-acid polypeptide reads, in one-letter code: D-aminoacyl-tRNA deacylase (158 aa).

Residues 144-145 (GP) carry the Gly-cisPro motif, important for rejection of L-amino acids motif.

The protein belongs to the DTD family. Homodimer.

Its subcellular location is the cytoplasm. It catalyses the reaction glycyl-tRNA(Ala) + H2O = tRNA(Ala) + glycine + H(+). The catalysed reaction is a D-aminoacyl-tRNA + H2O = a tRNA + a D-alpha-amino acid + H(+). An aminoacyl-tRNA editing enzyme that deacylates mischarged D-aminoacyl-tRNAs. Also deacylates mischarged glycyl-tRNA(Ala), protecting cells against glycine mischarging by AlaRS. Acts via tRNA-based rather than protein-based catalysis; rejects L-amino acids rather than detecting D-amino acids in the active site. By recycling D-aminoacyl-tRNA to D-amino acids and free tRNA molecules, this enzyme counteracts the toxicity associated with the formation of D-aminoacyl-tRNA entities in vivo and helps enforce protein L-homochirality. This is D-aminoacyl-tRNA deacylase from Corynebacterium kroppenstedtii (strain DSM 44385 / JCM 11950 / CIP 105744 / CCUG 35717).